The primary structure comprises 202 residues: MKVAVVAVQGAVEEHESILEAAGERIGEDVEVVWARYPEDLEDVDAVVIPGGESTTIGRLMERHDLVKPLLELAESDTPILGTCAGMVILAREVVPQAHPGTEVEIEQPLLGLMDVRVVRNAFGRQRESFEVDIEIEGLEDRFRAVFIRAPAVDEVLSDDVKVLAEYGDYIVAVEQDHLLATAFHPELTDDPRLHAYFLEKV.

52–54 (GES) lines the L-glutamine pocket. Cysteine 84 functions as the Nucleophile in the catalytic mechanism. L-glutamine is bound by residues arginine 120 and 148–149 (IR). Residues histidine 185 and glutamate 187 each act as charge relay system in the active site.

It belongs to the glutaminase PdxT/SNO family. In terms of assembly, in the presence of PdxS, forms a dodecamer of heterodimers. Only shows activity in the heterodimer.

The enzyme catalyses aldehydo-D-ribose 5-phosphate + D-glyceraldehyde 3-phosphate + L-glutamine = pyridoxal 5'-phosphate + L-glutamate + phosphate + 3 H2O + H(+). The catalysed reaction is L-glutamine + H2O = L-glutamate + NH4(+). The protein operates within cofactor biosynthesis; pyridoxal 5'-phosphate biosynthesis. Catalyzes the hydrolysis of glutamine to glutamate and ammonia as part of the biosynthesis of pyridoxal 5'-phosphate. The resulting ammonia molecule is channeled to the active site of PdxS. The chain is Pyridoxal 5'-phosphate synthase subunit PdxT from Methanopyrus kandleri (strain AV19 / DSM 6324 / JCM 9639 / NBRC 100938).